Reading from the N-terminus, the 549-residue chain is Tigger transposable element-derived protein 7 (549 aa).

An HTH psq-type domain is found at 1–52; that stretch reads MNKRGKYTTLNLEEKMKVLSRIEAGRSLKSVMDEFGISKSTFYDIKKNKKLI. DNA-binding regions (H-T-H motif) lie at residues 28–48 and 101–132; these read LKSV…IKKN and VELQ…FRNR. The HTH CENPB-type domain occupies 68–139; it reads KRKRTTGAKY…RNRHAIGNRK (72 aa). The region spanning 169-399 is the DDE-1 domain; it reads LCLAQLYSGD…VKQITIANAW (231 aa). Positions 527-549 are disordered; sequence FLKPRPHNIKDSFSGPSTSGSNH. Over residues 540–549 the composition is skewed to polar residues; it reads SGPSTSGSNH.

It belongs to the tigger transposable element derived protein family. Expressed in all tissues tested. Higher expression in testis and ovary.

The protein resides in the nucleus. In Homo sapiens (Human), this protein is Tigger transposable element-derived protein 7 (TIGD7).